Reading from the N-terminus, the 531-residue chain is UDP-glucuronosyltransferase 2B13 (531 aa).

An N-terminal signal peptide occupies residues 1–24 (MPVKCISVLLLLLQLSCCFSSGSC). Asn69, Asn101, and Asn317 each carry an N-linked (GlcNAc...) asparagine glycan. A helical membrane pass occupies residues 495–511 (VIGFLLACVAITTYLIV).

It belongs to the UDP-glycosyltransferase family.

It is found in the microsome membrane. The protein localises to the endoplasmic reticulum membrane. The enzyme catalyses glucuronate acceptor + UDP-alpha-D-glucuronate = acceptor beta-D-glucuronoside + UDP + H(+). In terms of biological role, UDPGT is of major importance in the conjugation and subsequent elimination of potentially toxic xenobiotics and endogenous compounds. Acts on small phenolic agents such as 2-beta-naphthol and 4-methylumbelliferone as well as bulky phenolic compounds like 2-hydroxy- and 4-hydroxybiphenyl. In contrast to 2B16 it is active toward octylgallate. This is UDP-glucuronosyltransferase 2B13 (UGT2B13) from Oryctolagus cuniculus (Rabbit).